The primary structure comprises 585 residues: Proline--tRNA ligase (585 aa).

An Isoglutamyl lysine isopeptide (Lys-Gln) (interchain with Q-Cter in protein Pup) cross-link involves residue K173.

The protein belongs to the class-II aminoacyl-tRNA synthetase family. ProS type 1 subfamily. Homodimer.

Its subcellular location is the cytoplasm. It carries out the reaction tRNA(Pro) + L-proline + ATP = L-prolyl-tRNA(Pro) + AMP + diphosphate. Functionally, catalyzes the attachment of proline to tRNA(Pro) in a two-step reaction: proline is first activated by ATP to form Pro-AMP and then transferred to the acceptor end of tRNA(Pro). As ProRS can inadvertently accommodate and process non-cognate amino acids such as alanine and cysteine, to avoid such errors it has two additional distinct editing activities against alanine. One activity is designated as 'pretransfer' editing and involves the tRNA(Pro)-independent hydrolysis of activated Ala-AMP. The other activity is designated 'posttransfer' editing and involves deacylation of mischarged Ala-tRNA(Pro). The misacylated Cys-tRNA(Pro) is not edited by ProRS. The chain is Proline--tRNA ligase (proS) from Mycolicibacterium smegmatis (strain ATCC 700084 / mc(2)155) (Mycobacterium smegmatis).